Here is a 35-residue protein sequence, read N- to C-terminus: Mu-theraphotoxin-Hd1a (35 aa).

3 cysteine pairs are disulfide-bonded: cysteine 2–cysteine 17, cysteine 9–cysteine 24, and cysteine 16–cysteine 31.

It belongs to the neurotoxin 10 (Hwtx-1) family. 22 (Htx-4) subfamily. In terms of tissue distribution, expressed by the venom gland.

It localises to the secreted. Functionally, gating-modifier toxin that reversibly and voltage-independently inhibits human Nav1.1/SCN1A and Nav1.7/SCN9A (IC(50)=111 nM). It also shows moderate inhibition on Nav1.2/SCN2A (1 uM inhibits current by 55%), Nav1.6/SCN8A (31%), Nav1.3/SCN5A (27%) and Nav1.4/SCN4A (23%). This toxin inhibits Nav1.7/SCN9A by interacting with the S3b-S4 paddle motif in channel domain II. In Cyriopagopus doriae (Tarantula spider), this protein is Mu-theraphotoxin-Hd1a.